The following is a 251-amino-acid chain: Octanoyltransferase (251 aa).

The BPL/LPL catalytic domain maps to 56-237 (ADTGDEIWVV…RLIANLDGES (182 aa)). Substrate contacts are provided by residues 96–103 (RGGQITYH), 168–170 (ALG), and 181–183 (GLS). The active-site Acyl-thioester intermediate is cysteine 199.

Belongs to the LipB family.

Its subcellular location is the cytoplasm. It catalyses the reaction octanoyl-[ACP] + L-lysyl-[protein] = N(6)-octanoyl-L-lysyl-[protein] + holo-[ACP] + H(+). The protein operates within protein modification; protein lipoylation via endogenous pathway; protein N(6)-(lipoyl)lysine from octanoyl-[acyl-carrier-protein]: step 1/2. In terms of biological role, catalyzes the transfer of endogenously produced octanoic acid from octanoyl-acyl-carrier-protein onto the lipoyl domains of lipoate-dependent enzymes. Lipoyl-ACP can also act as a substrate although octanoyl-ACP is likely to be the physiological substrate. The protein is Octanoyltransferase of Burkholderia ambifaria (strain MC40-6).